Here is a 335-residue protein sequence, read N- to C-terminus: MSLDINQIALHQLIKRDEQTLELVLRDSLLEPTSTVTEMMAELHRVYSAKNKAYGMFNEESELAQSLRLQRQGEEDFLAFSRAATGRLRDELAKYPFADGGIVLFCQYRYLAVEYLLVTVLNNLSSMRVNEQLDISSTHYLDINHADIVARIDLTEWETNPESTRYLTFLKGRVGRKVSDFFMDFLGASEGLNAKAQNKGLLQALDDFTAEAQLDKSERQNVRQQVYSYCSEQLQAGEEIELESLSKELAGVSEVSFQEFTADKGYELEESFPADRSTLRQLTKFAGSGGGLTVNFDAMLLGERIFWDPATDTLTIKGTPPNLRDQLQRRTSGGK.

The protein belongs to the YejK family.

The protein localises to the cytoplasm. Its subcellular location is the nucleoid. In Enterobacter sp. (strain 638), this protein is Nucleoid-associated protein Ent638_2782.